A 198-amino-acid chain; its full sequence is CXXC-type zinc finger protein 4 (198 aa).

Residues 114–134 are disordered; that stretch reads NHSSSSSSSSGGAGGANPAKK. The CXXC-type zinc finger occupies 132–173; the sequence is AKKKRKRCGVCVPCKRLINCGVCSSCRNRKTGHQICKFRKCE. Zn(2+) is bound by residues Cys-139, Cys-142, Cys-145, Cys-151, Cys-154, and Cys-157. The segment at 161-166 is interaction with DVL1; the sequence is KTGHQI. The Zn(2+) site is built by Cys-167 and Cys-172.

In terms of assembly, interacts with the PDZ domain of DVL1.

It localises to the cytoplasm. Functionally, acts as a negative regulator of the Wnt signaling pathway via its interaction with DVL1. Binds preferentially to DNA containing cytidine-phosphate-guanosine (CpG) dinucleotides over CpH (H=A, T, and C), hemimethylated-CpG and hemimethylated-hydroxymethyl-CpG. This is CXXC-type zinc finger protein 4 (CXXC4) from Homo sapiens (Human).